A 343-amino-acid chain; its full sequence is Heat-inducible transcription repressor HrcA (343 aa).

Belongs to the HrcA family.

Negative regulator of class I heat shock genes (grpE-dnaK-dnaJ and groELS operons). Prevents heat-shock induction of these operons. This chain is Heat-inducible transcription repressor HrcA, found in Clostridium botulinum (strain Alaska E43 / Type E3).